A 768-amino-acid polypeptide reads, in one-letter code: Histone-lysine N-methyltransferase, H3 lysine-36 specific (768 aa).

The AWS domain maps to 45–90; that stretch reads AEVMACDCKPGPTACDEDSGCINRLTSIECVRCCKGCQNKRFQGKK. The 118-residue stretch at 92–209 folds into the SET domain; it reads ASVDVISTEK…RGEEVTFDYN (118 aa). The Post-SET domain occupies 216–232; it reads EAQACYCGEKNCVGFLG. Residues 411–452 show a composition bias toward basic and acidic residues; it reads KIDPDGDEHSVSRGTSEEVTKESSKSEEPNDVEVVKVNKKAD. Disordered regions lie at residues 411–508, 533–610, and 680–768; these read KIDP…KGWQ, KASR…VNAQ, and VVKR…IDLE. Positions 453 to 469 are enriched in polar residues; the sequence is NNGNGVTDSPSTRSESP. Positions 501 to 534 constitute a WW domain; it reads RSLPKGWQFANDPQGKVYYYNLELNIQQWDFPKA. Basic and acidic residues-rich tracts occupy residues 555 to 568, 682 to 734, and 755 to 768; these read NRRD…ETRE, KRLE…KGEE, and TVKK…IDLE.

This sequence belongs to the class V-like SAM-binding methyltransferase superfamily. Histone-lysine methyltransferase family. SET2 subfamily.

It localises to the nucleus. Its subcellular location is the chromosome. The enzyme catalyses L-lysyl(36)-[histone H3] + 3 S-adenosyl-L-methionine = N(6),N(6),N(6)-trimethyl-L-lysyl(36)-[histone H3] + 3 S-adenosyl-L-homocysteine + 3 H(+). Functionally, histone methyltransferase that trimethylates histone H3 'Lys-36' forming H3K36me3. Involved in transcription elongation as well as in transcription repression. The polypeptide is Histone-lysine N-methyltransferase, H3 lysine-36 specific (set-2) (Yarrowia lipolytica (strain CLIB 122 / E 150) (Yeast)).